A 212-amino-acid polypeptide reads, in one-letter code: Large ribosomal subunit protein uL3 (212 aa).

Belongs to the universal ribosomal protein uL3 family. Part of the 50S ribosomal subunit. Forms a cluster with proteins L14 and L19.

In terms of biological role, one of the primary rRNA binding proteins, it binds directly near the 3'-end of the 23S rRNA, where it nucleates assembly of the 50S subunit. In Acetivibrio thermocellus (strain ATCC 27405 / DSM 1237 / JCM 9322 / NBRC 103400 / NCIMB 10682 / NRRL B-4536 / VPI 7372) (Clostridium thermocellum), this protein is Large ribosomal subunit protein uL3.